Consider the following 239-residue polypeptide: MGSTSDPSPSIITVAAEAPVTAERKQNLHLQEQLAKPYVARALAAVDPAHPNGTEGHEHHNMSVLQQRAAFFDRNNDGIVYPWETYQGFRAVGFGVLTSILGGFLINLGLSYRSQPSWIPSPVLSIHIKNIHRCKHGSDTESYDTEGRFEPSKFDAIFSKYALTQPDALTSEEISTMLQVNRNLLDFIGWVASIAEWRLLYQIGKDEDGLLHKETIRGAFDGSLFERLEKDRASRTKIV.

Position 2 is an N-acetylglycine (Gly-2). Positions 60–95 (HNMSVLQQRAAFFDRNNDGIVYPWETYQGFRAVGFG) constitute an EF-hand domain. The Ca(2+) site is built by Asp-73, Asn-75, Asp-77, and Glu-84. A Proline-knot motif is present at residues 116-125 (PSWIPSPVLS).

It belongs to the caleosin family. In terms of assembly, homodimer. Heme b is required as a cofactor. It depends on Ca(2+) as a cofactor. As to expression, expressed in pollen (at protein level). Not expressed in leaf, root, stem, tepal, ovary, style, filament or stigma (at protein level).

It localises to the lipid droplet. Its subcellular location is the microsome membrane. The catalysed reaction is RH + ROOH = ROH + ROH.. Calcium-binding peroxygenase involved in the degradation of storage lipid in oil bodies. In Lilium longiflorum (Trumpet lily), this protein is Peroxygenase.